We begin with the raw amino-acid sequence, 218 residues long: Ras-related protein Rab-11B (218 aa).

N-acetylglycine is present on glycine 2. Position 4 is a citrulline (arginine 4). 11 residues coordinate GTP: serine 20, glycine 21, glycine 23, lysine 24, serine 25, asparagine 26, asparagine 37, leucine 38, serine 40, serine 42, and threonine 43. A Mg(2+)-binding site is contributed by serine 25. Residues 36–47 (FNLESKSTIGVE) carry the Switch 1 motif. Threonine 43 and aspartate 66 together coordinate Mg(2+). The Switch 2 signature appears at 67–86 (TAGQERYRAITSAYYRGAVG). Residues glycine 69, asparagine 124, lysine 125, aspartate 127, alanine 155, and leucine 156 each coordinate GTP. Residues 184-218 (RAAHDESPGNNVVDISVPPTTDGQKPNKLQCCQNL) are disordered. S-geranylgeranyl cysteine attachment occurs at residues cysteine 214 and cysteine 215. Cysteine 215 carries the cysteine methyl ester modification. Residues 216–218 (QNL) constitute a propeptide, removed in mature form.

This sequence belongs to the small GTPase superfamily. Rab family. As to quaternary structure, interacts with KCNMA1. Interacts with RAB11FIP1, RAB11FIP2, RAB11FIP3 and RAB11FIP4. May interact with TBC1D14. Interacts with ATP6V1E1. Interacts with PI4KB. Interacts (GDP-bound form) with ZFYVE27. Interacts (GDP-bound form) with KIF5A in a ZFYVE27-dependent manner. Interacts with RELCH. Interacts (in GTP-bound form) with TBC1D8B (via domain Rab-GAP TBC). Forms a complex containing RAB11B, ASAP1, Rabin8/RAB3IP, RAP11FIP3 and ARF4. Interacts with WDR44. It depends on Mg(2+) as a cofactor. Citrullinated by PADI4. Post-translationally, (Microbial infection) Glycosylated on arginine residues by S.typhimurium protein Ssek3.

The protein resides in the recycling endosome membrane. It localises to the cytoplasmic vesicle. The protein localises to the secretory vesicle. Its subcellular location is the synaptic vesicle membrane. It is found in the phagosome membrane. The enzyme catalyses GTP + H2O = GDP + phosphate + H(+). Its activity is regulated as follows. Regulated by guanine nucleotide exchange factors (GEFs) which promote the exchange of bound GDP for free GTP. Regulated by GTPase activating proteins (GAPs) which increase the GTP hydrolysis activity. Inhibited by GDP dissociation inhibitors (GDIs) which prevent Rab-GDP dissociation. Functionally, the small GTPases Rab are key regulators of intracellular membrane trafficking, from the formation of transport vesicles to their fusion with membranes. Rabs cycle between an inactive GDP-bound form and an active GTP-bound form that is able to recruit to membranes different set of downstream effectors directly responsible for vesicle formation, movement, tethering and fusion. The small Rab GTPase RAB11B plays a role in endocytic recycling, regulating apical recycling of several transmembrane proteins including cystic fibrosis transmembrane conductance regulator/CFTR, epithelial sodium channel/ENaC, potassium voltage-gated channel, and voltage-dependent L-type calcium channel. May also regulate constitutive and regulated secretion, like insulin granule exocytosis. Required for melanosome transport and release from melanocytes. Also regulates V-ATPase intracellular transport in response to extracellular acidosis. Promotes Rabin8/RAB3IP preciliary vesicular trafficking to mother centriole by forming a ciliary targeting complex containing Rab11, ASAP1, Rabin8/RAB3IP, RAB11FIP3 and ARF4, thereby regulating ciliogenesis initiation. On the contrary, upon LPAR1 receptor signaling pathway activation, interaction with phosphorylated WDR44 prevents Rab11-RAB3IP-RAB11FIP3 complex formation and cilia growth. In Homo sapiens (Human), this protein is Ras-related protein Rab-11B.